The primary structure comprises 397 residues: MAKAKFERTKPHVNIGTIGHIDHGKTTLTAAITKVLHDKYPDLNAASAFDQIDKAPEERQRGITISIAHVEYQTEARHYAHVDCPGHADYIKNMITGAAQMDGAILVVAATDGPMPQTKEHVLLARQVGVPYIVVALNKADMVDDEEILELVELEVRELLSEYDFPGDDLPVVQVSALKALEGDKEWGDKLLGLMDAVDEAIPTPPRDTDKPFLMPVEDVFTITGRGTVVTGRIERGVLKVNETVDIIGIKTEKTTTTVTGIEMFRKLLDEGQAGENVGLLLRGIKREDVERGQVIIKPGSVTPHTEFEAAAYILSKDEGGRHTPFFNNYRPQFYFRTTDVTGVVTLPEGTEMVMPGDNTDMTVALIQPVAMEEGLKFAIREGGRTVGAGQVTKITK.

Positions 10 to 206 (KPHVNIGTIG…AVDEAIPTPP (197 aa)) constitute a tr-type G domain. The tract at residues 19–26 (GHIDHGKT) is G1. 19–26 (GHIDHGKT) contacts GTP. Mg(2+) is bound at residue T26. A G2 region spans residues 62 to 66 (GITIS). Positions 83-86 (DCPG) are G3. GTP-binding positions include 83–87 (DCPGH) and 138–141 (NKAD). Residues 138-141 (NKAD) form a G4 region. The tract at residues 176–178 (SAL) is G5.

Belongs to the TRAFAC class translation factor GTPase superfamily. Classic translation factor GTPase family. EF-Tu/EF-1A subfamily. In terms of assembly, monomer.

The protein localises to the cytoplasm. The enzyme catalyses GTP + H2O = GDP + phosphate + H(+). Functionally, GTP hydrolase that promotes the GTP-dependent binding of aminoacyl-tRNA to the A-site of ribosomes during protein biosynthesis. In Kitasatospora aureofaciens (Streptomyces aureofaciens), this protein is Elongation factor Tu.